The chain runs to 332 residues: 4-hydroxythreonine-4-phosphate dehydrogenase (332 aa).

Substrate contacts are provided by histidine 138 and threonine 139. Residues histidine 168, histidine 213, and histidine 269 each contribute to the a divalent metal cation site. The substrate site is built by lysine 277, asparagine 286, and arginine 295.

This sequence belongs to the PdxA family. In terms of assembly, homodimer. Zn(2+) is required as a cofactor. The cofactor is Mg(2+). Co(2+) serves as cofactor.

It is found in the cytoplasm. It carries out the reaction 4-(phosphooxy)-L-threonine + NAD(+) = 3-amino-2-oxopropyl phosphate + CO2 + NADH. It participates in cofactor biosynthesis; pyridoxine 5'-phosphate biosynthesis; pyridoxine 5'-phosphate from D-erythrose 4-phosphate: step 4/5. In terms of biological role, catalyzes the NAD(P)-dependent oxidation of 4-(phosphooxy)-L-threonine (HTP) into 2-amino-3-oxo-4-(phosphooxy)butyric acid which spontaneously decarboxylates to form 3-amino-2-oxopropyl phosphate (AHAP). This is 4-hydroxythreonine-4-phosphate dehydrogenase from Vibrio parahaemolyticus serotype O3:K6 (strain RIMD 2210633).